The sequence spans 83 residues: Calsensin (83 aa).

EF-hand domains follow at residues 4–39 and 46–81; these read KVKAELEAAFKKLDANGDGYVTALELQTFMVTLDAY and KVKEASAKLIKMADKNSDGKISKEEFLNANAELLCQ. Ca(2+) is bound by residues D17, N19, D21, Y23, E28, D59, N61, D63, K65, and E70.

In terms of tissue distribution, selectively expressed in a small group of neurons.

It localises to the cytoplasm. May function as a trigger protein which interacts with a larger protein. May mediate calcium-dependent signal transduction events in the growth cones and axons of a small group of sensory neurons which fasciculate in a single axon tract. The chain is Calsensin from Haemopis marmorata (Green horse leech).